The following is a 366-amino-acid chain: sn-glycerol-3-phosphate import ATP-binding protein UgpC (366 aa).

Residues 4 to 235 enclose the ABC transporter domain; it reads VTLRNVRKTY…PASTFVASFI (232 aa). 37–44 lines the ATP pocket; it reads GPSGCGKS.

This sequence belongs to the ABC transporter superfamily. sn-glycerol-3-phosphate importer (TC 3.A.1.1.3) family. As to quaternary structure, the complex is composed of two ATP-binding proteins (UgpC), two transmembrane proteins (UgpA and UgpE) and a solute-binding protein (UgpB).

It localises to the cell inner membrane. It catalyses the reaction sn-glycerol 3-phosphate(out) + ATP + H2O = sn-glycerol 3-phosphate(in) + ADP + phosphate + H(+). In terms of biological role, part of the ABC transporter complex UgpBAEC involved in sn-glycerol-3-phosphate (G3P) import. Responsible for energy coupling to the transport system. The polypeptide is sn-glycerol-3-phosphate import ATP-binding protein UgpC (Rhodopseudomonas palustris (strain BisB18)).